The sequence spans 332 residues: L-lactate dehydrogenase A chain (332 aa).

Residues 29 to 57 and arginine 99 contribute to the NAD(+) site; that span reads GMVGMASAVSILLKDLCDELALVDVMEDK. Residues arginine 106, asparagine 138, and arginine 169 each contribute to the substrate site. Asparagine 138 lines the NAD(+) pocket. Residue histidine 193 is the Proton acceptor of the active site. Residue threonine 248 coordinates substrate.

It belongs to the LDH/MDH superfamily. LDH family. Homotetramer.

The protein resides in the cytoplasm. The catalysed reaction is (S)-lactate + NAD(+) = pyruvate + NADH + H(+). Its pathway is fermentation; pyruvate fermentation to lactate; (S)-lactate from pyruvate: step 1/1. In terms of biological role, interconverts simultaneously and stereospecifically pyruvate and lactate with concomitant interconversion of NADH and NAD(+). The chain is L-lactate dehydrogenase A chain (ldha) from Sphyraena idiastes (Pelican barracuda).